We begin with the raw amino-acid sequence, 224 residues long: 7-cyano-7-deazaguanine synthase (224 aa).

Position 12 to 22 (12 to 22 (LSGGLDSSTVT)) interacts with ATP. Zn(2+) contacts are provided by cysteine 193, cysteine 201, cysteine 204, and cysteine 207.

Belongs to the QueC family. Zn(2+) serves as cofactor.

The catalysed reaction is 7-carboxy-7-deazaguanine + NH4(+) + ATP = 7-cyano-7-deazaguanine + ADP + phosphate + H2O + H(+). It functions in the pathway purine metabolism; 7-cyano-7-deazaguanine biosynthesis. Catalyzes the ATP-dependent conversion of 7-carboxy-7-deazaguanine (CDG) to 7-cyano-7-deazaguanine (preQ(0)). This Prochlorococcus marinus (strain AS9601) protein is 7-cyano-7-deazaguanine synthase.